The following is a 106-amino-acid chain: NADH-quinone oxidoreductase subunit K (106 aa).

3 helical membrane passes run 10–30 (IHYY…GVMV), 35–55 (VLIF…FVTF), and 67–87 (VVFF…AIVI).

The protein belongs to the complex I subunit 4L family. As to quaternary structure, NDH-1 is composed of 14 different subunits. Subunits NuoA, H, J, K, L, M, N constitute the membrane sector of the complex.

It localises to the cell inner membrane. The enzyme catalyses a quinone + NADH + 5 H(+)(in) = a quinol + NAD(+) + 4 H(+)(out). Functionally, NDH-1 shuttles electrons from NADH, via FMN and iron-sulfur (Fe-S) centers, to quinones in the respiratory chain. The immediate electron acceptor for the enzyme in this species is believed to be ubiquinone. Couples the redox reaction to proton translocation (for every two electrons transferred, four hydrogen ions are translocated across the cytoplasmic membrane), and thus conserves the redox energy in a proton gradient. The polypeptide is NADH-quinone oxidoreductase subunit K (Leptospira interrogans serogroup Icterohaemorrhagiae serovar copenhageni (strain Fiocruz L1-130)).